The chain runs to 697 residues: Ion-translocating oxidoreductase complex subunit C (697 aa).

4Fe-4S ferredoxin-type domains are found at residues 366-397 (AEMG…QQLY) and 407-436 (KARN…VQYY). Residues cysteine 377, cysteine 380, cysteine 383, cysteine 387, cysteine 416, cysteine 419, cysteine 422, and cysteine 426 each contribute to the [4Fe-4S] cluster site. A disordered region spans residues 576–674 (AQLESEPVKS…APEEDPRKAA (99 aa)). Over residues 581–596 (EPVKSESEAPEEDPRK) the composition is skewed to basic and acidic residues. The segment covering 597-615 (AAVAAAIARVKAKKAAQAQ) has biased composition (low complexity). The span at 619–634 (EPVKSESEAPEEDPRK) shows a compositional bias: basic and acidic residues. Low complexity predominate over residues 635-653 (AAVAAAIARVKAKKAAQAQ). Residues 657 to 672 (EPVKSESEAPEEDPRK) are compositionally biased toward basic and acidic residues.

Belongs to the 4Fe4S bacterial-type ferredoxin family. RnfC subfamily. The complex is composed of six subunits: RnfA, RnfB, RnfC, RnfD, RnfE and RnfG. [4Fe-4S] cluster serves as cofactor.

Its subcellular location is the cell inner membrane. Its function is as follows. Part of a membrane-bound complex that couples electron transfer with translocation of ions across the membrane. The sequence is that of Ion-translocating oxidoreductase complex subunit C from Yersinia enterocolitica serotype O:8 / biotype 1B (strain NCTC 13174 / 8081).